The chain runs to 388 residues: Succinate--CoA ligase [ADP-forming] subunit beta (388 aa).

An ATP-grasp domain is found at Lys9–His244. Residues Lys46, Gly53 to Gly55, Glu99, Thr102, and Glu107 contribute to the ATP site. Mg(2+) contacts are provided by Asn199 and Asp213. Residues Asn264 and Gly321 to Val323 contribute to the substrate site.

The protein belongs to the succinate/malate CoA ligase beta subunit family. Heterotetramer of two alpha and two beta subunits. The cofactor is Mg(2+).

It catalyses the reaction succinate + ATP + CoA = succinyl-CoA + ADP + phosphate. The enzyme catalyses GTP + succinate + CoA = succinyl-CoA + GDP + phosphate. It functions in the pathway carbohydrate metabolism; tricarboxylic acid cycle; succinate from succinyl-CoA (ligase route): step 1/1. Succinyl-CoA synthetase functions in the citric acid cycle (TCA), coupling the hydrolysis of succinyl-CoA to the synthesis of either ATP or GTP and thus represents the only step of substrate-level phosphorylation in the TCA. The beta subunit provides nucleotide specificity of the enzyme and binds the substrate succinate, while the binding sites for coenzyme A and phosphate are found in the alpha subunit. This is Succinate--CoA ligase [ADP-forming] subunit beta from Hamiltonella defensa subsp. Acyrthosiphon pisum (strain 5AT).